Here is a 95-residue protein sequence, read N- to C-terminus: Small ribosomal subunit protein bS18 (95 aa).

It belongs to the bacterial ribosomal protein bS18 family. In terms of assembly, part of the 30S ribosomal subunit. Forms a tight heterodimer with protein bS6.

Binds as a heterodimer with protein bS6 to the central domain of the 16S rRNA, where it helps stabilize the platform of the 30S subunit. The polypeptide is Small ribosomal subunit protein bS18 (Rickettsia felis (strain ATCC VR-1525 / URRWXCal2) (Rickettsia azadi)).